The sequence spans 261 residues: Segregation and condensation protein A (261 aa).

Belongs to the ScpA family. In terms of assembly, component of a cohesin-like complex composed of ScpA, ScpB and the Smc homodimer, in which ScpA and ScpB bind to the head domain of Smc. The presence of the three proteins is required for the association of the complex with DNA.

Its subcellular location is the cytoplasm. Functionally, participates in chromosomal partition during cell division. May act via the formation of a condensin-like complex containing Smc and ScpB that pull DNA away from mid-cell into both cell halves. In Ligilactobacillus salivarius (strain UCC118) (Lactobacillus salivarius), this protein is Segregation and condensation protein A.